A 675-amino-acid polypeptide reads, in one-letter code: MASERLHLILLVFFNHLTFLLSQQEEAGFIYNGFGQAQAGLHLDGAAKILFPDGLLQLTNASTQQMGHAFFKKPFKFDSYEKKLSFSTHFVCALVPKPGADGGHGIAFVVSSSIDFTQADPTQYLGLLNISTNGSPSSQLLAIELDTVESAEFDDIDKNHVGIDIKSLNSVESASASYFSNAKGKNQSIKLLSGDPIQIWVDYEGALLNVTVAPLSIQKPNHPLLSRSINLTDIFPDRKLFFGFSAATGTLVSYQYILGWSFSRSRMLLQSLDFSKLPQIPHPKAKQEQTSPLLIVLLMLLVLIMLAVLGGIYLYRRKKYAEVREVWEKEYSPHRFSYKSLYKATNRFDKDGRLGKGGFGEVYRGNLPHVGDIAVKRVCHDAKQGMKQFVAEVVTMGSLKHRNLVPLLGYCRRKGELLLVSEYMSNGSLDQYLFHREKPALSWSQRLVILKDIASALSYLHTGANQVVLHRDIKASNVMLDSEFNGRLGDFGMARFEDYGDSVPVTAAVGTMGYMAPELTTMGTSTRTDVYAFGVLMLEVTCGRRPLDPKIPSEKRHLIKWVCDCWRRDSIVDAIDTRLGGQYSVEETVMVLKLGLICTNIVAESRPTMEQVIQYINQNLPLPNFSPGSLGIGVSTPVLLESVFNSRSSLAPSISPPSSHNSMFVTHTITYGDGR.

The N-terminal stretch at 1-22 is a signal peptide; that stretch reads MASERLHLILLVFFNHLTFLLS. Over 23–292 the chain is Extracellular; it reads QQEEAGFIYN…PKAKQEQTSP (270 aa). The tract at residues 27–263 is legume-lectin like; sequence AGFIYNGFGQ…YQYILGWSFS (237 aa). 5 N-linked (GlcNAc...) asparagine glycosylation sites follow: asparagine 60, asparagine 129, asparagine 186, asparagine 209, and asparagine 230. Residues 293-313 form a helical membrane-spanning segment; the sequence is LLIVLLMLLVLIMLAVLGGIY. At 314-675 the chain is on the cytoplasmic side; it reads LYRRKKYAEV…THTITYGDGR (362 aa). Residues 348-620 enclose the Protein kinase domain; the sequence is FDKDGRLGKG…QVIQYINQNL (273 aa). Residues 354–362 and lysine 376 each bind ATP; that span reads LGKGGFGEV. The Proton acceptor role is filled by aspartate 472.

The protein in the C-terminal section; belongs to the protein kinase superfamily. Ser/Thr protein kinase family. It in the N-terminal section; belongs to the leguminous lectin family.

Its subcellular location is the cell membrane. It carries out the reaction L-seryl-[protein] + ATP = O-phospho-L-seryl-[protein] + ADP + H(+). It catalyses the reaction L-threonyl-[protein] + ATP = O-phospho-L-threonyl-[protein] + ADP + H(+). The sequence is that of Putative L-type lectin-domain containing receptor kinase I.11 (LECRK111) from Arabidopsis thaliana (Mouse-ear cress).